The following is a 272-amino-acid chain: Undecaprenyl-diphosphatase (272 aa).

The next 8 membrane-spanning stretches (helical) occupy residues 6-26 (SLLV…LPVS), 45-65 (AKTF…VMFW), 89-109 (LSLI…LVFH), 115-135 (LFNP…LIIA), 156-176 (AFFI…RSGA), 189-209 (YAAS…ATAL), 221-241 (ADLP…LVAI), and 251-271 (ISFI…FAVF).

This sequence belongs to the UppP family.

It localises to the cell inner membrane. The catalysed reaction is di-trans,octa-cis-undecaprenyl diphosphate + H2O = di-trans,octa-cis-undecaprenyl phosphate + phosphate + H(+). In terms of biological role, catalyzes the dephosphorylation of undecaprenyl diphosphate (UPP). Confers resistance to bacitracin. The sequence is that of Undecaprenyl-diphosphatase from Cronobacter sakazakii (strain ATCC BAA-894) (Enterobacter sakazakii).